The chain runs to 466 residues: Chromosomal replication initiator protein DnaA (466 aa).

The segment at 1 to 86 (MSLSLWQQCL…EVGTKPVTQT (86 aa)) is domain I, interacts with DnaA modulators. Positions 86 to 129 (TLKTPVHNVVAPTQTTTAQPQRVAPAARSGWDNVPAPAEPTYRS) are domain II. The tract at residues 130–346 (NVNVKHTFDN…GALNRVIANA (217 aa)) is domain III, AAA+ region. The ATP site is built by Gly174, Gly176, Lys177, and Thr178. Residues 347-466 (NFTGRAITID…FSNLIRTLSS (120 aa)) form a domain IV, binds dsDNA region.

It belongs to the DnaA family. In terms of assembly, oligomerizes as a right-handed, spiral filament on DNA at oriC.

It localises to the cytoplasm. Plays an essential role in the initiation and regulation of chromosomal replication. ATP-DnaA binds to the origin of replication (oriC) to initiate formation of the DNA replication initiation complex once per cell cycle. Binds the DnaA box (a 9 base pair repeat at the origin) and separates the double-stranded (ds)DNA. Forms a right-handed helical filament on oriC DNA; dsDNA binds to the exterior of the filament while single-stranded (ss)DNA is stabiized in the filament's interior. The ATP-DnaA-oriC complex binds and stabilizes one strand of the AT-rich DNA unwinding element (DUE), permitting loading of DNA polymerase. After initiation quickly degrades to an ADP-DnaA complex that is not apt for DNA replication. Binds acidic phospholipids. The chain is Chromosomal replication initiator protein DnaA from Salmonella choleraesuis (strain SC-B67).